Consider the following 767-residue polypeptide: Start control protein cdc10 (767 aa).

Residues 17 to 44 (FSYQKRPEDEPSQPLSNRNINKLNDSST) are disordered. The span at 29–44 (QPLSNRNINKLNDSST) shows a compositional bias: polar residues. The region spanning 66–173 (ELYAVECSGM…FNLDLFPKFS (108 aa)) is the HTH APSES-type domain. Residues 98 to 119 (ISQILRLAGTSSSENAKELDDI) constitute a DNA-binding region (H-T-H motif). Residues 189-230 (TSSFNTRSPLRNHNFSNPSKSSKNGVHTINNMQSSPSPSSSF) are disordered. The segment covering 192 to 221 (FNTRSPLRNHNFSNPSKSSKNGVHTINNMQ) has biased composition (polar residues). Serine 252 is modified (phosphoserine). Positions 261-264 (KRHR) match the Nuclear localization signal motif. ANK repeat units follow at residues 356 to 385 (LGHA…NPLR) and 483 to 512 (NGDT…SAYI). A disordered region spans residues 542–562 (VSLMSENLSSKEKTAVPPRQK).

DSC1 contains cdc10 and sct1/res1. Interacts with pol5.

It is found in the nucleus. Its function is as follows. Major component of the cell cycle transcription factor complex MBF (MCB binding factor, also known as DSC1), that controls G1-S phase specific gene expression. Involved in the control of rRNA production, via interaction with pol5. May be involved in the transcriptional regulation of the cdc22 and cdt1 genes. In fission yeast, two genes, cdc10 and cdc2, are required for the cell cycle control called start, the point early in the G1 phase at which cells become committed to the mitotic cycle. The sequence is that of Start control protein cdc10 (cdc10) from Schizosaccharomyces pombe (strain 972 / ATCC 24843) (Fission yeast).